An 878-amino-acid polypeptide reads, in one-letter code: Probable LRR receptor-like serine/threonine-protein kinase MEE39 (878 aa).

A signal peptide spans 1 to 25 (MKNLCWVFLSLFWFGVFLIIRFAEG). Residues 26–514 (QNQEGFISLD…IDKPKKKVAV (489 aa)) lie on the Extracellular side of the membrane. 8 N-linked (GlcNAc...) asparagine glycosylation sites follow: N183, N203, N235, N290, N404, N418, N445, and N466. 3 LRR repeats span residues 413–436 (RIISLNLSSSGLSGTIVSNFQNLA), 437–458 (HLESLDLSNNSLSGIVPEFLAT), and 461–483 (SLLVINLSGNKLSGAIPQALRDR). A helical transmembrane segment spans residues 515-535 (KVVAPVASIAAIVVVILLFVF). At 536 to 878 (KKKMSSRNKP…FDTDVKPKAR (343 aa)) the chain is on the cytoplasmic side. T557 is modified (phosphothreonine). Positions 566–840 (KNLQRPLGEG…QVIINLKECL (275 aa)) constitute a Protein kinase domain. ATP is bound by residues 572-580 (LGEGGFGVV) and K594. Y639 is subject to Phosphotyrosine. D691 serves as the catalytic Proton acceptor. S726 carries the post-translational modification Phosphoserine. T727 and T732 each carry phosphothreonine. Y740 is subject to Phosphotyrosine. Residues 849-869 (RNNQNMDSGHSSDQLNVTVTF) show a composition bias toward polar residues. Positions 849-878 (RNNQNMDSGHSSDQLNVTVTFDTDVKPKAR) are disordered.

Belongs to the protein kinase superfamily. Ser/Thr protein kinase family.

It is found in the membrane. It catalyses the reaction L-seryl-[protein] + ATP = O-phospho-L-seryl-[protein] + ADP + H(+). It carries out the reaction L-threonyl-[protein] + ATP = O-phospho-L-threonyl-[protein] + ADP + H(+). In terms of biological role, receptor-like serine/threonine-kinase required during the endosperm development in seeds. In Arabidopsis thaliana (Mouse-ear cress), this protein is Probable LRR receptor-like serine/threonine-protein kinase MEE39 (MEE39).